A 519-amino-acid polypeptide reads, in one-letter code: Exodeoxyribonuclease 7 large subunit (519 aa).

The tract at residues 493-519 (AISTGKSSNTNRKSAPAREPGKQGSLF) is disordered. Polar residues predominate over residues 496–505 (TGKSSNTNRK).

This sequence belongs to the XseA family. In terms of assembly, heterooligomer composed of large and small subunits.

The protein localises to the cytoplasm. It carries out the reaction Exonucleolytic cleavage in either 5'- to 3'- or 3'- to 5'-direction to yield nucleoside 5'-phosphates.. Bidirectionally degrades single-stranded DNA into large acid-insoluble oligonucleotides, which are then degraded further into small acid-soluble oligonucleotides. In Chelativorans sp. (strain BNC1), this protein is Exodeoxyribonuclease 7 large subunit.